Here is a 332-residue protein sequence, read N- to C-terminus: MTGQPLTMETAAGADAGTGAATHPADGRRPVVVVTGMSGGGLSTALKALEDLGYEAVDNLRLSLLTALVFQAHDRPLAIGIDSRTRDFSADALLQELDALRAHPDLRVRLLFMEATEEVLQRRYTETRRPHPLAVDRPVPDGIALERTLLVPLREAAEVVIDTSQLSIHDVRRLLTGHFRLDGDPSLHVFVTSFAYRHGVPREADLVFDVRFLDNPHWDPALRPLTGLDRPVAEHVGRDPDFPDFFRHLTTLLAPLLPRYAREGKHYLTIAIGCTGGRHRSVFTAHRLAGWLRDQGYKVGEGHRDLDRRHPAPEPAPPWREVASRETPEEHR.

The disordered stretch occupies residues 1 to 27 (MTGQPLTMETAAGADAGTGAATHPADG). Positions 10–22 (TAAGADAGTGAAT) are enriched in low complexity. 36 to 43 (GMSGGGLS) contacts ATP. A GTP-binding site is contributed by 82–85 (DSRT). Composition is skewed to basic and acidic residues over residues 302 to 312 (GHRDLDRRHPA) and 322 to 332 (VASRETPEEHR). Positions 302–332 (GHRDLDRRHPAPEPAPPWREVASRETPEEHR) are disordered.

It belongs to the RapZ-like family.

Functionally, displays ATPase and GTPase activities. The protein is Nucleotide-binding protein RC1_2868 of Rhodospirillum centenum (strain ATCC 51521 / SW).